Consider the following 740-residue polypeptide: MEHTYQYSWIIPFIPLPVPILLGVGLLLFPTATKNLRRTWSFLSIFLLSIVMIFSLYLSIQQIIISCIHQNVWSWTINNDLSFEFGYFIDPLSCIMVILITTVGIFVLIYSDNYMSHDQGYLRFFAYMGFFNTSMLGLVTSSNLIQIYFFWELVGMCSYLLIGFWFTRPIAANACQKAFVTNRVGDFGLLLGILGLYWVTGSFEFQDLFEIFNNLILNNRVNLLFLTLCAFLFFMGPIAKSAQFPLHVWLPDAMEGPTPISALIHAATMVAAGIFLVARLLPLFIVIPSIMYIISLIGIITILLGATLALAQKDIKRGLAYSTMSQLGYMMLALGMGSYRSALFHLITHAYSKALLFLGSGSIIHSMEALVGYSPDKSQNMILMGGLTKHVPITKTAFLLGTLSLCGIPPLACFWSKDEILNDSLLFSPIFAIIACSTAGLTAFYMFRIYLLTFEGHLNTYFLNYSGKKSSSVYSISLWGKEDGKKINRNFCLVPLLTMNNKKGASFFSKKTYQINNNVRNQTLITVANCALNKKIYYYPHESDNTILFPMLVLLLFTLFIGAIGIPLNQEGFNILSKLFTPSINLLHKNSTNFVDWYEFFRNATFSVSIAFFGIFIAYWLYKPFYSSLLNLTLLNSFQKWSSNPSCWEKLINCVYNWSYNRGYIDTFYKKSLTESIRRLAKQINFFDKRIIDGITNGVGITSFFVGEFTKYIGGSRISSYLFLYLSYVSLFFLFLKILN.

16 helical membrane passes run 9–29, 40–60, 89–109, 125–145, 147–167, 185–205, 221–241, 258–278, 283–303, 327–347, 354–374, 396–416, 425–445, 547–567, 606–626, and 718–738; these read WIIP…LLLF, WSFL…YLSI, IDPL…FVLI, FAYM…SNLI, IYFF…FWFT, GDFG…SFEF, VNLL…IAKS, TPIS…FLVA, LFIV…ITIL, LGYM…FHLI, ALLF…VGYS, TAFL…CFWS, LLFS…TAFY, ILFP…IGIP, FSVS…KPFY, and ISSY…FLKI.

It belongs to the complex I subunit 5 family. As to quaternary structure, NDH is composed of at least 16 different subunits, 5 of which are encoded in the nucleus.

The protein resides in the plastid. It localises to the chloroplast thylakoid membrane. It carries out the reaction a plastoquinone + NADH + (n+1) H(+)(in) = a plastoquinol + NAD(+) + n H(+)(out). The enzyme catalyses a plastoquinone + NADPH + (n+1) H(+)(in) = a plastoquinol + NADP(+) + n H(+)(out). Its function is as follows. NDH shuttles electrons from NAD(P)H:plastoquinone, via FMN and iron-sulfur (Fe-S) centers, to quinones in the photosynthetic chain and possibly in a chloroplast respiratory chain. The immediate electron acceptor for the enzyme in this species is believed to be plastoquinone. Couples the redox reaction to proton translocation, and thus conserves the redox energy in a proton gradient. The sequence is that of NAD(P)H-quinone oxidoreductase subunit 5, chloroplastic (ndhF) from Aethionema grandiflorum (Persian stone-cress).